A 128-amino-acid polypeptide reads, in one-letter code: Large ribosomal subunit protein bL12 (128 aa).

Belongs to the bacterial ribosomal protein bL12 family. In terms of assembly, homodimer. Part of the ribosomal stalk of the 50S ribosomal subunit. Forms a multimeric L10(L12)X complex, where L10 forms an elongated spine to which 2 to 4 L12 dimers bind in a sequential fashion. Binds GTP-bound translation factors.

In terms of biological role, forms part of the ribosomal stalk which helps the ribosome interact with GTP-bound translation factors. Is thus essential for accurate translation. This Desulfovibrio desulfuricans (strain ATCC 27774 / DSM 6949 / MB) protein is Large ribosomal subunit protein bL12.